Consider the following 585-residue polypeptide: Folylpolyglutamate synthase, mitochondrial (585 aa).

The N-terminal 39 residues, 1 to 39 (MSRARCHALFLAAVSPRGATTRVAVRRGLSAWPVLQEPD), are a transit peptide targeting the mitochondrion. 103-106 (GKGS) serves as a coordination point for ATP. S127, E198, and H226 together coordinate Mg(2+). 2 residues coordinate ATP: R361 and D375. The tract at residues 477 to 497 (EEQVSPDPWSTPGQEQDGPAS) is disordered. S537 is modified (phosphoserine).

It belongs to the folylpolyglutamate synthase family. Monomer. A monovalent cation is required as a cofactor.

The protein resides in the mitochondrion inner membrane. The protein localises to the mitochondrion matrix. Its subcellular location is the cytoplasm. It carries out the reaction (6S)-5,6,7,8-tetrahydrofolyl-(gamma-L-Glu)(n) + L-glutamate + ATP = (6S)-5,6,7,8-tetrahydrofolyl-(gamma-L-Glu)(n+1) + ADP + phosphate + H(+). It participates in cofactor biosynthesis; tetrahydrofolylpolyglutamate biosynthesis. Catalyzes conversion of folates to polyglutamate derivatives allowing concentration of folate compounds in the cell and the intracellular retention of these cofactors, which are important substrates for most of the folate-dependent enzymes that are involved in one-carbon transfer reactions involved in purine, pyrimidine and amino acid synthesis. This is Folylpolyglutamate synthase, mitochondrial (FPGS) from Bos taurus (Bovine).